Reading from the N-terminus, the 292-residue chain is 4-hydroxy-tetrahydrodipicolinate synthase (292 aa).

Residue Thr50 coordinates pyruvate. Tyr139 acts as the Proton donor/acceptor in catalysis. Residue Lys167 is the Schiff-base intermediate with substrate of the active site. Ile208 contacts pyruvate.

The protein belongs to the DapA family. In terms of assembly, homotetramer; dimer of dimers.

It is found in the cytoplasm. The catalysed reaction is L-aspartate 4-semialdehyde + pyruvate = (2S,4S)-4-hydroxy-2,3,4,5-tetrahydrodipicolinate + H2O + H(+). The protein operates within amino-acid biosynthesis; L-lysine biosynthesis via DAP pathway; (S)-tetrahydrodipicolinate from L-aspartate: step 3/4. Functionally, catalyzes the condensation of (S)-aspartate-beta-semialdehyde [(S)-ASA] and pyruvate to 4-hydroxy-tetrahydrodipicolinate (HTPA). In Oenococcus oeni (strain ATCC BAA-331 / PSU-1), this protein is 4-hydroxy-tetrahydrodipicolinate synthase.